Reading from the N-terminus, the 258-residue chain is Indole-3-glycerol phosphate synthase (258 aa).

This sequence belongs to the TrpC family.

The catalysed reaction is 1-(2-carboxyphenylamino)-1-deoxy-D-ribulose 5-phosphate + H(+) = (1S,2R)-1-C-(indol-3-yl)glycerol 3-phosphate + CO2 + H2O. It participates in amino-acid biosynthesis; L-tryptophan biosynthesis; L-tryptophan from chorismate: step 4/5. This Geobacillus thermodenitrificans (strain NG80-2) protein is Indole-3-glycerol phosphate synthase.